Reading from the N-terminus, the 328-residue chain is Protoheme IX farnesyltransferase (328 aa).

A run of 8 helical transmembrane segments spans residues 31 to 51 (IILL…KGEV), 53 to 73 (LFLL…ANAI), 120 to 140 (VFAN…YVGV), 153 to 173 (IVIG…AVTG), 181 to 201 (LLFA…AIYI), 226 to 246 (IWVY…PLHV), 250 to 270 (IYAV…WQLL), and 285 to 305 (YSIY…LPFT).

The protein belongs to the UbiA prenyltransferase family. Protoheme IX farnesyltransferase subfamily.

The protein resides in the cell inner membrane. The catalysed reaction is heme b + (2E,6E)-farnesyl diphosphate + H2O = Fe(II)-heme o + diphosphate. Its pathway is porphyrin-containing compound metabolism; heme O biosynthesis; heme O from protoheme: step 1/1. Its function is as follows. Converts heme B (protoheme IX) to heme O by substitution of the vinyl group on carbon 2 of heme B porphyrin ring with a hydroxyethyl farnesyl side group. In Trichodesmium erythraeum (strain IMS101), this protein is Protoheme IX farnesyltransferase.